A 531-amino-acid chain; its full sequence is Arginine--tRNA ligase (531 aa).

Residues 113–123 carry the 'HIGH' region motif; that stretch reads ANPTGPLHIGH.

This sequence belongs to the class-I aminoacyl-tRNA synthetase family. Monomer.

The protein resides in the cytoplasm. It carries out the reaction tRNA(Arg) + L-arginine + ATP = L-arginyl-tRNA(Arg) + AMP + diphosphate. The sequence is that of Arginine--tRNA ligase from Campylobacter lari (strain RM2100 / D67 / ATCC BAA-1060).